A 1249-amino-acid chain; its full sequence is MQPLVLLLLFILCFSGLGQPGIINNDLQTLLEVKKSLVTNPQEDDPLRQWNSDNINYCSWTGVTCDNTGLFRVIALNLTGLGLTGSISPWFGRFDNLIHLDLSSNNLVGPIPTALSNLTSLESLFLFSNQLTGEIPSQLGSLVNIRSLRIGDNELVGDIPETLGNLVNLQMLALASCRLTGPIPSQLGRLVRVQSLILQDNYLEGPIPAELGNCSDLTVFTAAENMLNGTIPAELGRLENLEILNLANNSLTGEIPSQLGEMSQLQYLSLMANQLQGLIPKSLADLGNLQTLDLSANNLTGEIPEEFWNMSQLLDLVLANNHLSGSLPKSICSNNTNLEQLVLSGTQLSGEIPVELSKCQSLKQLDLSNNSLAGSIPEALFELVELTDLYLHNNTLEGTLSPSISNLTNLQWLVLYHNNLEGKLPKEISALRKLEVLFLYENRFSGEIPQEIGNCTSLKMIDMFGNHFEGEIPPSIGRLKELNLLHLRQNELVGGLPASLGNCHQLNILDLADNQLSGSIPSSFGFLKGLEQLMLYNNSLQGNLPDSLISLRNLTRINLSHNRLNGTIHPLCGSSSYLSFDVTNNGFEDEIPLELGNSQNLDRLRLGKNQLTGKIPWTLGKIRELSLLDMSSNALTGTIPLQLVLCKKLTHIDLNNNFLSGPIPPWLGKLSQLGELKLSSNQFVESLPTELFNCTKLLVLSLDGNSLNGSIPQEIGNLGALNVLNLDKNQFSGSLPQAMGKLSKLYELRLSRNSLTGEIPVEIGQLQDLQSALDLSYNNFTGDIPSTIGTLSKLETLDLSHNQLTGEVPGSVGDMKSLGYLNVSFNNLGGKLKKQFSRWPADSFLGNTGLCGSPLSRCNRVRSNNKQQGLSARSVVIISAISALTAIGLMILVIALFFKQRHDFFKKVGHGSTAYTSSSSSSQATHKPLFRNGASKSDIRWEDIMEATHNLSEEFMIGSGGSGKVYKAELENGETVAVKKILWKDDLMSNKSFSREVKTLGRIRHRHLVKLMGYCSSKSEGLNLLIYEYMKNGSIWDWLHEDKPVLEKKKKLLDWEARLRIAVGLAQGVEYLHHDCVPPIVHRDIKSSNVLLDSNMEAHLGDFGLAKVLTENCDTNTDSNTWFACSYGYIAPEYAYSLKATEKSDVYSMGIVLMEIVTGKMPTDSVFGAEMDMVRWVETHLEVAGSARDKLIDPKLKPLLPFEEDAACQVLEIALQCTKTSPQERPSSRQACDSLLHVYNNRTAGYKKL.

A signal peptide spans 1-18 (MQPLVLLLLFILCFSGLG). Residues 19–876 (QPGIINNDLQ…QQGLSARSVV (858 aa)) are Extracellular-facing. Asn77 and Asn117 each carry an N-linked (GlcNAc...) asparagine glycan. LRR repeat units lie at residues 94 to 118 (FDNLIHLDLSSNNLVGPIPTALSNL), 119 to 142 (TSLESLFLFSNQLTGEIPSQLGSL), 144 to 166 (NIRSLRIGDNELVGDIPETLGNL), 168 to 190 (NLQMLALASCRLTGPIPSQLGRL), 191 to 214 (VRVQSLILQDNYLEGPIPAELGNC), 216 to 238 (DLTVFTAAENMLNGTIPAELGRL), 239 to 262 (ENLEILNLANNSLTGEIPSQLGEM), 264 to 285 (QLQYLSLMANQLQGLIPKSLAD), 286 to 310 (LGNLQTLDLSANNLTGEIPEEFWNM), 312 to 334 (QLLDLVLANNHLSGSLPKSICSN), 336 to 359 (TNLEQLVLSGTQLSGEIPVELSKC), 360 to 383 (QSLKQLDLSNNSLAGSIPEALFEL), 385 to 407 (ELTDLYLHNNTLEGTLSPSISNL), 408 to 431 (TNLQWLVLYHNNLEGKLPKEISAL), 433 to 455 (KLEVLFLYENRFSGEIPQEIGNC), 457 to 479 (SLKMIDMFGNHFEGEIPPSIGRL), 480 to 503 (KELNLLHLRQNELVGGLPASLGNC), 505 to 527 (QLNILDLADNQLSGSIPSSFGFL), 528 to 551 (KGLEQLMLYNNSLQGNLPDSLISL), 553 to 574 (NLTRINLSHNRLNGTIHPLCGS), 576 to 598 (SYLSFDVTNNGFEDEIPLELGNS), 599 to 622 (QNLDRLRLGKNQLTGKIPWTLGKI), 623 to 646 (RELSLLDMSSNALTGTIPLQLVLC), 648 to 670 (KLTHIDLNNNFLSGPIPPWLGKL), 671 to 694 (SQLGELKLSSNQFVESLPTELFNC), 696 to 718 (KLLVLSLDGNSLNGSIPQEIGNL), 719 to 742 (GALNVLNLDKNQFSGSLPQAMGKL), 744 to 766 (KLYELRLSRNSLTGEIPVEIGQL), 767 to 791 (QDLQSALDLSYNNFTGDIPSTIGTL), 792 to 815 (SKLETLDLSHNQLTGEVPGSVGDM), and 817 to 838 (SLGYLNVSFNNLGGKLKKQFSR). Asn213, Asn228, and Asn248 each carry an N-linked (GlcNAc...) asparagine glycan. 3 N-linked (GlcNAc...) asparagine glycosylation sites follow: Asn298, Asn309, and Asn334. N-linked (GlcNAc...) asparagine glycans are attached at residues Asn369, Asn393, and Asn406. Asn454 carries an N-linked (GlcNAc...) asparagine glycan. N-linked (GlcNAc...) asparagine glycans are attached at residues Asn537, Asn553, Asn558, and Asn565. N-linked (GlcNAc...) asparagine glycans are attached at residues Asn693 and Asn708. N-linked (GlcNAc...) asparagine glycosylation is present at Asn779. Asn822 is a glycosylation site (N-linked (GlcNAc...) asparagine). The chain crosses the membrane as a helical span at residues 877-897 (IISAISALTAIGLMILVIALF). Residues 898 to 1249 (FKQRHDFFKK…NNRTAGYKKL (352 aa)) are Cytoplasmic-facing. The residue at position 948 (Thr948) is a Phosphothreonine. A Protein kinase domain is found at 951 to 1240 (LSEEFMIGSG…ACDSLLHVYN (290 aa)). Residues 957-965 (IGSGGSGKV) and Lys979 each bind ATP. Tyr1027 and Tyr1071 each carry phosphotyrosine. Asp1084 acts as the Proton acceptor in catalysis. Phosphotyrosine is present on residues Tyr1129 and Tyr1136.

The protein belongs to the protein kinase superfamily. Ser/Thr protein kinase family. Interacts with CIF1 and CIF2. As to expression, mostly expressed in siliques, seeds, developing embryos and seedlings, detected in flower buds and roots, but not in leaves or stems.

The protein resides in the cell membrane. The catalysed reaction is L-seryl-[protein] + ATP = O-phospho-L-seryl-[protein] + ADP + H(+). It carries out the reaction L-threonyl-[protein] + ATP = O-phospho-L-threonyl-[protein] + ADP + H(+). Its function is as follows. Together with GSO2, receptor-like serine/threonine-kinase required during the development of the epidermal surface in embryos and cotyledons. In coordination with GSO2, regulates root growth through control of cell division and cell fate specification. Controls seedling root growth by modulating sucrose response after germination. Receptor of the peptide hormones CIF1 and CIF2 required for contiguous Casparian strip diffusion barrier formation in roots. Required for localizing CASP proteins into the Casparian strip following an uninterrupted, ring-like domain, to trigger endodermal differentiation and thus regulate potassium ion (K) homeostasis. Involved in the maintenance of water transport and root pressure. May also be involved in the regulation of suberin accumulation in the endodermis. The sequence is that of LRR receptor-like serine/threonine-protein kinase GSO1 from Arabidopsis thaliana (Mouse-ear cress).